The primary structure comprises 338 residues: Glycerol-3-phosphate dehydrogenase [NAD(P)+] (338 aa).

Positions 14, 15, 35, and 109 each coordinate NADPH. Sn-glycerol 3-phosphate contacts are provided by Lys-109, Gly-138, and Thr-140. Ala-142 contributes to the NADPH binding site. Residues Lys-194, Asp-247, Ser-257, Arg-258, and Asn-259 each contribute to the sn-glycerol 3-phosphate site. Catalysis depends on Lys-194, which acts as the Proton acceptor. Arg-258 is an NADPH binding site. Residues Val-282 and Glu-284 each contribute to the NADPH site.

Belongs to the NAD-dependent glycerol-3-phosphate dehydrogenase family.

Its subcellular location is the cytoplasm. The enzyme catalyses sn-glycerol 3-phosphate + NAD(+) = dihydroxyacetone phosphate + NADH + H(+). It carries out the reaction sn-glycerol 3-phosphate + NADP(+) = dihydroxyacetone phosphate + NADPH + H(+). It functions in the pathway membrane lipid metabolism; glycerophospholipid metabolism. Functionally, catalyzes the reduction of the glycolytic intermediate dihydroxyacetone phosphate (DHAP) to sn-glycerol 3-phosphate (G3P), the key precursor for phospholipid synthesis. This is Glycerol-3-phosphate dehydrogenase [NAD(P)+] from Shewanella sediminis (strain HAW-EB3).